A 245-amino-acid chain; its full sequence is Orotidine 5'-phosphate decarboxylase (245 aa).

Substrate contacts are provided by residues D22, K44, 71–80, T131, R192, Q201, G221, and R222; that span reads DLKFHDIPNT. Catalysis depends on K73, which acts as the Proton donor.

It belongs to the OMP decarboxylase family. Type 1 subfamily. In terms of assembly, homodimer.

It carries out the reaction orotidine 5'-phosphate + H(+) = UMP + CO2. It participates in pyrimidine metabolism; UMP biosynthesis via de novo pathway; UMP from orotate: step 2/2. Catalyzes the decarboxylation of orotidine 5'-monophosphate (OMP) to uridine 5'-monophosphate (UMP). The protein is Orotidine 5'-phosphate decarboxylase of Escherichia coli O6:K15:H31 (strain 536 / UPEC).